The chain runs to 493 residues: Leucine-rich repeat-containing protein 14 (493 aa).

An LRR 1; degenerate repeat occupies 111–146 (KHTLRVLDMTGLLDDGVEQDPGTMSMWDCTAAVART). One copy of the LRR 2; degenerate repeat lies at 194–218 (RLCCRDLRAEDLPMRNTVALLQLLD). One copy of the LRR 3; degenerate repeat lies at 219–246 (AGCLRRVDLRFNNLGLRGLSVIIPHVAR). The LRR 4; degenerate repeat unit spans residues 247–282 (FQHLASLRLHYVHGDSRQPSVDGEDNFRYFLAQMGR). 5 LRR repeats span residues 283 to 307 (FTCL…LSTL), 308 to 339 (QSPL…VHLK), 340 to 360 (KLDL…QGLL), 364 to 391 (AATL…VLTR), and 392 to 416 (CASL…LLRD).

The protein belongs to the PRAME family. LRRC14 subfamily. Interacts with IKBKB; disrupts IKBKB-IKBKG interaction preventing I-kappa-B-kinase (IKK) core complex formation and leading to a decrease of IKBKB phosphorylation and NF-kappaB activation. Interacts with CHUK.

The protein localises to the cytoplasm. In terms of biological role, negatively regulates Toll-like receptor-mediated NF-kappa-B signaling by disrupting IKK core complex formation through interaction with IKBKB. This Bos taurus (Bovine) protein is Leucine-rich repeat-containing protein 14.